Consider the following 139-residue polypeptide: Small ribosomal subunit protein eS12 (139 aa).

This sequence belongs to the eukaryotic ribosomal protein eS12 family. Subunit of the 40S ribosomal complex. Part of the small subunit (SSU) processome, composed of more than 70 proteins and the RNA chaperone small nucleolar RNA (snoRNA) U3.

It localises to the nucleus. The protein resides in the nucleolus. In terms of biological role, subunit of the 40S ribosomal complex. Part of the small subunit (SSU) processome, first precursor of the small eukaryotic ribosomal subunit. During the assembly of the SSU processome in the nucleolus, many ribosome biogenesis factors, an RNA chaperone and ribosomal proteins associate with the nascent pre-rRNA and work in concert to generate RNA folding, modifications, rearrangements and cleavage as well as targeted degradation of pre-ribosomal RNA by the RNA exosome. In wing imaginal disks, might have a role in translation rate, growth and cell competition, probably through regulation of Xrp1 expression. Might have a role in development and longevity. The sequence is that of Small ribosomal subunit protein eS12 from Drosophila melanogaster (Fruit fly).